A 258-amino-acid chain; its full sequence is Imidazole glycerol phosphate synthase subunit HisF (258 aa).

Residues aspartate 11 and aspartate 130 contribute to the active site.

The protein belongs to the HisA/HisF family. As to quaternary structure, heterodimer of HisH and HisF.

The protein localises to the cytoplasm. It carries out the reaction 5-[(5-phospho-1-deoxy-D-ribulos-1-ylimino)methylamino]-1-(5-phospho-beta-D-ribosyl)imidazole-4-carboxamide + L-glutamine = D-erythro-1-(imidazol-4-yl)glycerol 3-phosphate + 5-amino-1-(5-phospho-beta-D-ribosyl)imidazole-4-carboxamide + L-glutamate + H(+). It functions in the pathway amino-acid biosynthesis; L-histidine biosynthesis; L-histidine from 5-phospho-alpha-D-ribose 1-diphosphate: step 5/9. Functionally, IGPS catalyzes the conversion of PRFAR and glutamine to IGP, AICAR and glutamate. The HisF subunit catalyzes the cyclization activity that produces IGP and AICAR from PRFAR using the ammonia provided by the HisH subunit. The sequence is that of Imidazole glycerol phosphate synthase subunit HisF from Escherichia coli O6:K15:H31 (strain 536 / UPEC).